The chain runs to 450 residues: Cytidylate cyclase (450 aa).

Positions 97-236 (VTMFVDIRKS…LPVDMTAKLQ (140 aa)) constitute a Guanylate cyclase domain. Phenylalanine 100 provides a ligand contact to a ribonucleoside 5'-triphosphate. Residues aspartate 102, isoleucine 103, and aspartate 146 each contribute to the Mn(2+) site. Residues 318–450 (PNQFNFECFV…YRNIIGVYIK (133 aa)) are AGS-C domain.

This sequence belongs to the adenylyl cyclase class-4/guanylyl cyclase family. Pyrimidine cyclase subfamily. Homodimer. Mn(2+) is required as a cofactor.

It localises to the cytoplasm. It carries out the reaction CTP = 3',5'-cyclic CMP + diphosphate. In E.coli strain MG1655 transformed with both genes cCMP appears between 15 and 30 minutes after infection with phage T5 (at protein level). No cCMP accumulates in uninfected cells. Pycsar (pyrimidine cyclase system for antiphage resistance) provides immunity against bacteriophage. The pyrimidine cyclase (PycC) synthesizes cyclic nucleotides in response to infection; these serve as specific second messenger signals. The signal activates the adjacent effector, leading to bacterial cell death and abortive phage infection. A clade E Pycsar system. In terms of biological role, the pyrimidine cyclase gene of a two-gene Pycsar system, generates cyclic CMP (cCMP) from CTP in response to bacteriophage infection. Has little to no activity on ATP, GTP or UTP. Expression of this and adjacent effector EcPycTM (AC P0DV25) confers resistance to bacteriophage P1 and T5; expression of this gene alone does not confer resistance. When cells expressing the Pycsar system are infected by phage T5 at low multiplicity of infection (0.2 MOI) the culture survives, at 2.0 MOI bacteria enter growth arrest. The same cells enter growth arrest after exposure to 250 uM cCMP but not cUMP; thus the effector protein responds only to the cNMP produced by its cognate NTP cyclase. Some of the cells treated with cCMP have abnormal membrane protrusions. This Escherichia coli protein is Cytidylate cyclase.